The chain runs to 705 residues: MSNLHLYTSARFRNFPTTFSLRHHHNDPNNQRRRSIFSKLRDKTLDPGGDLITRWNHIFLITCLLALFLDPLYFYLPIVQAGTACMSIDVRFGIFVTCFRNLADLSFLIHILLKFKTAFVSKSSRVFGRGELVMDRREIAIRYLKSEFVIDLAATLPLPQIMIWFVIPNAGEFRYAAHQNHTLSLIVLIQYVPRFLVMLPLNRRIIKATGVAAKTAWSGAAYNLILYLLVSHVLGSVWYVLSIQRQHECWRRECIKEMNATHSPSCSLLFLDCGSLHDPGRQAWMRITRVLSNCDARNDDDQHFQFGMFGDAFTNDVTSSPFFDKYFYCLWWGLRNLSSYGQSLAASTLSSETIFSCFICVAGLVFFSHLIGNVQNYLQSTTARLDEWRVRRRDTEEWMRHRQLPDELQERVRRFVQYKWLTTRGVDEEAILRALPLDLRRQIQRHLCLALVRRVPFFAQMDDQLLDAICERLVPSLNTKDTYVIREGDPVNEMLFIIRGQMESSTTDGGRSGFFNSITLRPGDFCGEELLTWALVPNINHNLPLSTRTVRTLSEVEAFALRAEDLKFVANQFRRLHSKKLQHAFRYYSHQWRAWGTCFIQAAWRRYMKRKLAMELARQEEEDDYFYDDDGDYQFEEDMPESNNNNGDENSSNNQNLSATILASKFAANTKRGVLGNQRGSTRIDPDHPTLKMPKMFKPEDPGFF.

Residues 1 to 57 (MSNLHLYTSARFRNFPTTFSLRHHHNDPNNQRRRSIFSKLRDKTLDPGGDLITRWNH) are Cytoplasmic-facing. Residues 58 to 78 (IFLITCLLALFLDPLYFYLPI) form a helical membrane-spanning segment. Over 79 to 91 (VQAGTACMSIDVR) the chain is Extracellular. The helical transmembrane segment at 92-112 (FGIFVTCFRNLADLSFLIHIL) threads the bilayer. Residues 113-147 (LKFKTAFVSKSSRVFGRGELVMDRREIAIRYLKSE) lie on the Cytoplasmic side of the membrane. Residues 148–168 (FVIDLAATLPLPQIMIWFVIP) form a helical membrane-spanning segment. Residues 169 to 180 (NAGEFRYAAHQN) are Extracellular-facing. Residues 181–201 (HTLSLIVLIQYVPRFLVMLPL) form a helical membrane-spanning segment. Residues 202–222 (NRRIIKATGVAAKTAWSGAAY) lie on the Cytoplasmic side of the membrane. Residues 223 to 243 (NLILYLLVSHVLGSVWYVLSI) form a helical membrane-spanning segment. Over 244 to 353 (QRQHECWRRE…LAASTLSSET (110 aa)) the chain is Extracellular. The chain crosses the membrane as a helical span at residues 354–374 (IFSCFICVAGLVFFSHLIGNV). Residues 375-705 (QNYLQSTTAR…MFKPEDPGFF (331 aa)) lie on the Cytoplasmic side of the membrane. Residues 457 to 580 (FFAQ…HSKK) and Glu528 contribute to the a nucleoside 3',5'-cyclic phosphate site. The interval 573-588 (FRRLHSKKLQHAFRYY) is calmodulin-binding. Residues 593–622 (RAWGTCFIQAAWRRYMKRKLAMELARQEEE) enclose the IQ domain. Disordered regions lie at residues 636–655 (EEDM…SNNQ) and 672–705 (RGVL…PGFF). The segment covering 642–655 (SNNNNGDENSSNNQ) has biased composition (low complexity).

Belongs to the cyclic nucleotide-gated cation channel (TC 1.A.1.5) family. In terms of assembly, homotetramer or heterotetramer.

The protein localises to the cell membrane. In terms of biological role, putative cyclic nucleotide-gated ion channel. In Arabidopsis thaliana (Mouse-ear cress), this protein is Probable cyclic nucleotide-gated ion channel 16 (CNGC16).